The following is a 445-amino-acid chain: Phosphoglucosamine mutase 1 (445 aa).

Catalysis depends on serine 102, which acts as the Phosphoserine intermediate. Serine 102, aspartate 241, aspartate 243, and aspartate 245 together coordinate Mg(2+). Phosphoserine is present on serine 102.

It belongs to the phosphohexose mutase family. Mg(2+) serves as cofactor. Post-translationally, activated by phosphorylation.

It catalyses the reaction alpha-D-glucosamine 1-phosphate = D-glucosamine 6-phosphate. In terms of biological role, catalyzes the conversion of glucosamine-6-phosphate to glucosamine-1-phosphate. This chain is Phosphoglucosamine mutase 1, found in Shewanella amazonensis (strain ATCC BAA-1098 / SB2B).